The following is a 51-amino-acid chain: Protein HokD (51 aa).

The chain crosses the membrane as a helical span at residues 5-25 (KAMLIALIVICLTVIVTALVT).

This sequence belongs to the Hok/Gef family.

The protein localises to the cell inner membrane. Its function is as follows. Toxic component of a type I toxin-antitoxin (TA) system. When overexpressed kills cells within minutes; causes collapse of the transmembrane potential and arrest of respiration. Its toxic effect is probably neutralized by an antisense antitoxin Sok RNA. The chain is Protein HokD (hokD) from Escherichia coli O157:H7.